We begin with the raw amino-acid sequence, 105 residues long: Large ribosomal subunit protein bL21 (105 aa).

The protein belongs to the bacterial ribosomal protein bL21 family. In terms of assembly, part of the 50S ribosomal subunit. Contacts protein L20.

In terms of biological role, this protein binds to 23S rRNA in the presence of protein L20. The polypeptide is Large ribosomal subunit protein bL21 (Rhizobium etli (strain ATCC 51251 / DSM 11541 / JCM 21823 / NBRC 15573 / CFN 42)).